Reading from the N-terminus, the 547-residue chain is Chaperonin GroEL (547 aa).

ATP is bound by residues 30–33 (TLGP), lysine 51, 87–91 (DGTTT), glycine 415, and aspartate 495.

Belongs to the chaperonin (HSP60) family. In terms of assembly, forms a cylinder of 14 subunits composed of two heptameric rings stacked back-to-back. Interacts with the co-chaperonin GroES.

The protein resides in the cytoplasm. It carries out the reaction ATP + H2O + a folded polypeptide = ADP + phosphate + an unfolded polypeptide.. In terms of biological role, together with its co-chaperonin GroES, plays an essential role in assisting protein folding. The GroEL-GroES system forms a nano-cage that allows encapsulation of the non-native substrate proteins and provides a physical environment optimized to promote and accelerate protein folding. In Thiobacillus denitrificans (strain ATCC 25259 / T1), this protein is Chaperonin GroEL.